Here is a 195-residue protein sequence, read N- to C-terminus: FMN-dependent NADH:quinone oxidoreductase (195 aa).

Residues S10, 16-18, and 88-91 contribute to the FMN site; these read SVS and MYNF.

It belongs to the azoreductase type 1 family. In terms of assembly, homodimer. FMN is required as a cofactor.

It catalyses the reaction 2 a quinone + NADH + H(+) = 2 a 1,4-benzosemiquinone + NAD(+). The catalysed reaction is N,N-dimethyl-1,4-phenylenediamine + anthranilate + 2 NAD(+) = 2-(4-dimethylaminophenyl)diazenylbenzoate + 2 NADH + 2 H(+). Quinone reductase that provides resistance to thiol-specific stress caused by electrophilic quinones. Functionally, also exhibits azoreductase activity. Catalyzes the reductive cleavage of the azo bond in aromatic azo compounds to the corresponding amines. The chain is FMN-dependent NADH:quinone oxidoreductase from Francisella philomiragia subsp. philomiragia (strain ATCC 25017 / CCUG 19701 / FSC 153 / O#319-036).